Reading from the N-terminus, the 191-residue chain is Cathelicidin-related peptide Oh-Cath (191 aa).

The N-terminal stretch at 1 to 22 is a signal peptide; it reads MEGFFWKTLLVVGALAIGGTSS. A propeptide spanning residues 23-161 is cleaved from the precursor; sequence LPHKPLTYEE…DQPRRVKRFK (139 aa). 2 disulfide bridges follow: cysteine 81–cysteine 92 and cysteine 103–cysteine 120. The span at 125-151 shows a compositional bias: acidic residues; that stretch reads EEEEQKQEEGNEEEKEVEKEEKEEDEK. The segment at 125–154 is disordered; sequence EEEEQKQEEGNEEEKEVEKEEKEEDEKDQP.

The protein belongs to the cathelicidin family. In terms of tissue distribution, expressed by the venom gland.

The protein localises to the secreted. Its subcellular location is the target cell membrane. In terms of biological role, potent antimicrobial peptide against Gram-negative (MIC=0.25 ug/ml against E.coli ATCC 25922, MIC=0.5 ug/ml against P.aeruginosa) and Gram-positive bacteria (MIC=64 ug/ml against E.faecalis, MIC=64 ug/ml against S.aureus). Adopts an amphipathic alpha helical conformation, that may allow to partition into the target membrane. Low hemolytic activities have been observed on mammalian cells. This Ophiophagus hannah (King cobra) protein is Cathelicidin-related peptide Oh-Cath.